The following is a 2626-amino-acid chain: Unconventional myosin-IXa (2626 aa).

A Ras-associating domain is found at 14-112 (NEHTLRIYPG…YRFLLREKNL (99 aa)). The 872-residue stretch at 146–1017 (KDFDDLCSLP…ERQHLQDLLH (872 aa)) folds into the Myosin motor domain. The helical transmembrane segment at 175–195 (IYTYVGSILIAINPFKFLPIY) threads the bilayer. ATP is bound at residue 239–246 (GESGSGKT). S755 is subject to Phosphoserine. Positions 908–919 (QAEPYFVKCIRS) are actin-binding. IQ domains are found at residues 1021–1041 (LRRI…QQFL), 1043–1072 (LRQA…EKDA), 1075–1104 (MASA…AAVI), 1116–1145 (RHRA…KIIL), and 1139–1168 (QRNK…ERLK). The segment at 1022–1163 (RRIILLQRWF…RARQRYKALK (142 aa)) is neck or regulatory domain. Residues 1164 to 2589 (EERLKETKLE…LKNVKNSPQK (1426 aa)) are tail. Residues 1221-1240 (RESSMDFSKESPDKQQERGR) show a composition bias toward basic and acidic residues. Residues 1221–1276 (RESSMDFSKESPDKQQERGRSQSGTDLQGDVIVRQRPKSLEDLHQKKVGRAKRESR) form a disordered region. At S1243 the chain carries Phosphoserine. T1245 bears the Phosphothreonine mark. S1259 is subject to Phosphoserine. A coiled-coil region spans residues 1265–1292 (QKKVGRAKRESRRMRELEQAIFSLELLK). Positions 1266–1276 (KKVGRAKRESR) are enriched in basic residues. A phosphoserine mark is found at S1300 and S1318. Over residues 1360–1375 (PSTFTNPKFDSQNNAL) the composition is skewed to polar residues. The segment at 1360–1397 (PSTFTNPKFDSQNNALSASSETSSTFSGKGASSDSEHL) is disordered. The segment covering 1376 to 1386 (SASSETSSTFS) has biased composition (low complexity). The stretch at 1493–1540 (TVLKKLEKLNIEKEKRQKQLQQQNEKEMMEQIRQQTDILEKERKAFKT) forms a coiled coil. 5 disordered regions span residues 1562 to 1602 (VERP…PPKD), 1618 to 1673 (SRTV…SRPI), 1689 to 1726 (GNPQ…RMAR), 1765 to 1784 (SELG…SEMT), and 1872 to 1907 (QYHP…KRGV). 2 stretches are compositionally biased toward basic and acidic residues: residues 1620-1632 (TVKE…RMGT) and 1659-1669 (HRSDDPSREGS). The span at 1716–1726 (PAHKKKARMAR) shows a compositional bias: basic residues. The span at 1772–1784 (SLGQASHSDSEMT) shows a compositional bias: polar residues. Positions 1887 to 1899 (CRKEFKENKEPSP) are enriched in basic and acidic residues. S2016 carries the post-translational modification Phosphoserine. The Phorbol-ester/DAG-type zinc-finger motif lies at 2067-2116 (GHMFKATQYSIPTYCEYCSSLIWIMDRASVCKLCKYACHKKCCLKTTAKC). Positions 2131–2319 (VELSRLTSED…LIVVEQMNKY (189 aa)) constitute a Rho-GAP domain. The segment at 2365–2385 (SGKGRLHRGSHPNPSSPVIVR) is disordered. Residue S2380 is modified to Phosphoserine. Residues 2408–2444 (TDQQQAAMQQEEKVLTEQIENLQKEKEELTFEMLVLE) adopt a coiled-coil conformation. The segment at 2449 to 2527 (DDEALESEAS…NTTSSHGTRK (79 aa)) is disordered. A compositionally biased stretch (low complexity) spans 2504–2522 (SLDSVSSSVSSCLSNTTSS). Position 2542 is a phosphoserine (S2542). Positions 2552 to 2614 (PLGQAKSLED…TVDSDCSSTQ (63 aa)) are disordered.

It belongs to the TRAFAC class myosin-kinesin ATPase superfamily. Myosin family. Post-translationally, phosphorylated by ALPK1 following monosodium urate monohydrate (MSU)-induced inflammation. As to expression, expressed at high levels in brain, followed by testis and spleen. Expressed at very low levels, in kidney. Detected abundantly in brain and testis and at lower levels in adrenal gland, kidney, lung and spleen (at protein level). In adrenal gland it is mostly found in the medulla but not in the cortex. In brain, it is found in the cerebellum and the CA2-CA3 regions of the hippocampus.

It is found in the membrane. It localises to the cytoplasm. Its subcellular location is the synapse. The protein resides in the cell projection. The protein localises to the growth cone. Myosins are actin-based motor molecules with ATPase activity. Unconventional myosins serve in intracellular movements. Regulates Rho by stimulating it's GTPase activity in neurons. Required for the regulation of neurite branching and motor neuron axon guidance. The chain is Unconventional myosin-IXa (Myo9a) from Rattus norvegicus (Rat).